Consider the following 350-residue polypeptide: Ribosome production factor 2 homolog (350 aa).

The Brix domain maps to Lys28–Ala266. Residues Pro192–Gly202 show a composition bias toward polar residues. Disordered stretches follow at residues Pro192–Pro219 and Met301–Gly350.

It belongs to the RPF2 family. In terms of assembly, component of a hexameric 5S RNP precursor complex, composed of 5S RNA, RRS1, RPF2, RPL5, RPL11 and SYO1; this complex acts as a precursor for ribosome assembly.

The protein resides in the nucleus. Its subcellular location is the nucleolus. Functionally, involved in ribosomal large subunit assembly. In Chaetomium thermophilum (strain DSM 1495 / CBS 144.50 / IMI 039719) (Thermochaetoides thermophila), this protein is Ribosome production factor 2 homolog.